Reading from the N-terminus, the 375-residue chain is 23S rRNA (uracil(747)-C(5))-methyltransferase RlmC (375 aa).

Residues Cys-3, Cys-11, Cys-14, and Cys-87 each coordinate [4Fe-4S] cluster. Residues Gln-212, Phe-241, Glu-262, and Asn-307 each coordinate S-adenosyl-L-methionine. The active-site Nucleophile is the Cys-334.

Belongs to the class I-like SAM-binding methyltransferase superfamily. RNA M5U methyltransferase family. RlmC subfamily.

The catalysed reaction is uridine(747) in 23S rRNA + S-adenosyl-L-methionine = 5-methyluridine(747) in 23S rRNA + S-adenosyl-L-homocysteine + H(+). Its function is as follows. Catalyzes the formation of 5-methyl-uridine at position 747 (m5U747) in 23S rRNA. The chain is 23S rRNA (uracil(747)-C(5))-methyltransferase RlmC from Escherichia coli O7:K1 (strain IAI39 / ExPEC).